The primary structure comprises 274 residues: Protein STAY-GREEN, chloroplastic (274 aa).

The transit peptide at Met1 to Arg48 directs the protein to the chloroplast.

It belongs to the staygreen family. As to quaternary structure, interacts with LHCII complex. In terms of tissue distribution, expressed in leaves, roots and developing seeds.

Its subcellular location is the plastid. It is found in the chloroplast membrane. It localises to the chloroplast stroma. Involved in the disassembling mechanism of the intact light-harvesting complex of photosystem II (LHCII) in the thylakoid membranes. Required to trigger chlorophyll degradation during natural and dark-induced leaf senescence. The sequence is that of Protein STAY-GREEN, chloroplastic (SGR) from Oryza sativa subsp. japonica (Rice).